A 139-amino-acid polypeptide reads, in one-letter code: Nucleoside diphosphate kinase (139 aa).

ATP contacts are provided by K10, F58, R86, T92, R103, and N113. H116 acts as the Pros-phosphohistidine intermediate in catalysis.

It belongs to the NDK family. In terms of assembly, homotetramer. It depends on Mg(2+) as a cofactor.

It is found in the cytoplasm. It carries out the reaction a 2'-deoxyribonucleoside 5'-diphosphate + ATP = a 2'-deoxyribonucleoside 5'-triphosphate + ADP. The catalysed reaction is a ribonucleoside 5'-diphosphate + ATP = a ribonucleoside 5'-triphosphate + ADP. Functionally, major role in the synthesis of nucleoside triphosphates other than ATP. The ATP gamma phosphate is transferred to the NDP beta phosphate via a ping-pong mechanism, using a phosphorylated active-site intermediate. In Caulobacter sp. (strain K31), this protein is Nucleoside diphosphate kinase.